Reading from the N-terminus, the 211-residue chain is BAG family molecular chaperone regulator 2 (211 aa).

N-acetylalanine is present on Ala-2. Ser-20, Ser-31, and Ser-73 each carry phosphoserine. A coiled-coil region spans residues 20–61; it reads SMADRSSRLLESLDQLELRVEALREAATAVEQEKEILLEMIH. Residues 109 to 189 form the BAG domain; that stretch reads SLKHATRIID…NIENSDKAIK (81 aa).

Binds to the ATPase domain of HSP/HSC70 chaperones. May interact with NWD1. Interacts with HSPA1A (via NBD), HSPA1B (via NBD) and HSPA8. May interact with DNJC9; the interaction seems to be histone-dependent.

Co-chaperone for HSP70 and HSC70 chaperone proteins. Acts as a nucleotide-exchange factor (NEF) promoting the release of ADP from the HSP70 and HSC70 proteins thereby triggering client/substrate protein release. The chain is BAG family molecular chaperone regulator 2 (BAG2) from Homo sapiens (Human).